A 461-amino-acid chain; its full sequence is E3 ubiquitin-protein ligase parkin (461 aa).

Residues 30–90 (VNIYVKSNVG…DSTVIEVLDF (61 aa)) form the Ubiquitin-like domain. Position 92 is a phosphoserine (Ser92). The segment at 145–227 (AHFFIYCANP…SQGENDTAVP (83 aa)) adopts an RING-type 0; atypical zinc-finger fold. Zn(2+) is bound by residues Cys151, Cys155, Cys167, and Cys170. At Thr176 the chain carries Phosphothreonine. Zn(2+) contacts are provided by Cys197, Cys202, Cys213, His216, Cys240, Cys243, Cys255, His259, Cys262, Cys265, Cys291, Cys295, Cys334, Cys339, Cys354, Cys356, Cys361, Cys364, His369, Cys373, Cys415, and Cys418. The TRIAD supradomain stretch occupies residues 236–461 (KKIPCLACTD…RDCMASHWFG (226 aa)). The segment at 240-295 (CLACTDICDPVLVFSCDNRHVTCLECFKNYCGSRLKDRQFLSHPDFGYTLPCPAGC) adopts an RING-type 1 zinc-finger fold. 2 consecutive IBR-type zinc fingers follow at residues 315-373 (EQYH…LGEC) and 411-452 (LTKP…PWER). The segment at 415–446 (CPKCRTSTERAGGCMHMICTRANCGFHWCWVC) adopts an RING-type 2; atypical zinc-finger fold. The active site involves Cys428. 6 residues coordinate Zn(2+): Cys433, Cys438, Cys443, Cys446, Cys454, and His458.

This sequence belongs to the RBR family. Parkin subfamily. As to quaternary structure, forms an E3 ubiquitin ligase complex with E2 ubiquitin-conjugating enzymes. In terms of processing, auto-ubiquitinates in an E2-dependent manner leading to its own degradation. Post-translationally, phosphorylated. Activation requires phosphorylation at Ser-92 by Pink1 and binding to Pink1-phosphorylated polyubiquitin chains. Phosphorylation at Thr-176 by Pink1 is also important for mitochondrial localization.

Its subcellular location is the mitochondrion. The protein resides in the cytoplasm. It is found in the cytosol. It catalyses the reaction [E2 ubiquitin-conjugating enzyme]-S-ubiquitinyl-L-cysteine + [acceptor protein]-L-lysine = [E2 ubiquitin-conjugating enzyme]-L-cysteine + [acceptor protein]-N(6)-ubiquitinyl-L-lysine.. It participates in protein modification; protein ubiquitination. With respect to regulation, in the autoinhibited state the side chain of Phe-460 inserts into a hydrophobic groove in RING-0, occluding the ubiquitin acceptor site Cys-428, whereas the REP repressor element binds RING-1 and blocks its E2-binding site. Activation of park requires 2 steps: (1) phosphorylation at Ser-92 by Pink1 and (2) binding to phosphorylated ubiquitin, leading to unlock repression of the catalytic Cys-428 by the RING-0 region via an allosteric mechanism and converting park to its fully-active form. According to another report, phosphorylation at Ser-92 by Pink1 is not essential for activation and only binding to phosphorylated ubiquitin is essential to unlock repression. Functionally, E3 ubiquitin-protein ligase which accepts ubiquitin from E2 ubiquitin-conjugating enzymes in the form of a thioester and then directly transfers the ubiquitin to targeted substrates, such as Marf, Opa1, Sep1, Tom20 and porin. Mediates monoubiquitination as well as 'Lys-6', 'Lys-11', 'Lys-48'-linked and 'Lys-63'-linked polyubiquitination of substrates, depending on the context. Protects against mitochondrial dysfunction during cellular stress, by acting downstream of Pink1, to coordinate mitochondrial quality control mechanisms that remove and replace dysfunctional mitochondrial components. Depending on the severity of mitochondrial damage and/or dysfunction, activity ranges from preventing apoptosis and stimulating mitochondrial biogenesis to regulating mitochondrial dynamics and eliminating severely damaged mitochondria via mitophagy. Appears to be particularly important in maintaining the physiology and function of cells with high energy demands that are undergoing stress or altered metabolic environment, including spermatids, muscle cells and neurons such as the dopaminergic (DA) neurons. Activation and recruitment onto the outer membrane of damaged/dysfunctional mitochondria (OMM) requires Pink1-mediated phosphorylation of both park and ubiquitin. In depolarized mitochondria, mediates the decision between mitophagy or preventing apoptosis by inducing either the poly- or monoubiquitination of porin/VDAC; polyubiquitination of porin promotes mitophagy, while monoubiquitination of porin decreases mitochondrial calcium influx which ultimately inhibits apoptosis. When cellular stress results in irreversible mitochondrial damage, promotes the autophagic degradation of dysfunctional depolarized mitochondria (mitophagy) by promoting the ubiquitination of mitochondrial proteins. Preferentially assembles 'Lys-6'-, 'Lys-11'- and 'Lys-63'-linked polyubiquitin chains following mitochondrial damage, leading to mitophagy. In developing tissues, inhibits JNK-mediated apoptosis by negatively regulating bsk transcription. The Pink1-park pathway also promotes fission and/or inhibits fusion of damaged mitochondria by mediating the ubiquitination and subsequent degradation of proteins involved in mitochondrial fusion/fission such as Marf and Opa1. This prevents the refusion of unhealthy mitochondria with the healthy mitochondrial network and/or initiates mitochondrial fragmentation facilitating their later engulfment by autophagosomes. Regulates motility of damaged mitochondria by phosphorylating Miro which likely promotes its park-dependent degradation by the proteasome; in motor neurons, this inhibits mitochondrial intracellular anterograde transport along the axons which probably increases the chance of the mitochondria being eliminated in the soma. The Pink1-park pathway is also involved in mitochondrial regeneration processes such as promoting mitochondrial biogenesis, activating localized mitochondrial repair, promoting selective turnover of mitochondrial proteins and initiating the mitochondrial import of endogenous proteins. Involved in mitochondrial biogenesis via the ubiquitination of transcriptional repressor Paris which leads to its subsequent proteasomal degradation and allows activation of the transcription factor srl. Promotes localized mitochondrial repair by activating the translation of specific nuclear-encoded mitochondrial RNAs (nc-mtRNAs) on the mitochondrial surface, including several key electron transport chain component nc-mtRNAs. The polypeptide is E3 ubiquitin-protein ligase parkin (Pediculus humanus subsp. corporis (Body louse)).